A 197-amino-acid polypeptide reads, in one-letter code: Signal-regulatory protein delta (197 aa).

An N-terminal signal peptide occupies residues 1–29 (MPIPASPLHPPLPSLLLYLLLELAGVTHV). Residues 31 to 135 (HVQQTEMSQT…IKEYQSGRGT (105 aa)) form the Ig-like V-type domain. C51 and C117 form a disulfide bridge. Residues 139–158 (VTEQNPRPPKNRPAGRAGSR) form a disordered region. A glycan (N-linked (GlcNAc...) asparagine) is linked at N174.

The protein localises to the secreted. The sequence is that of Signal-regulatory protein delta (SIRPD) from Homo sapiens (Human).